The sequence spans 76 residues: uncharacterized protein (76 aa).

3 helical membrane-spanning segments follow: residues 1-21, 35-55, and 56-76; these read MTAIIVYSCLTMCVIYFHLQL, CFDIFLLLIEMLKLIFYLLII, and NNKFYIFIIISIALITINTMI.

Its subcellular location is the cell membrane. This is an uncharacterized protein from Borreliella burgdorferi (strain ATCC 35210 / DSM 4680 / CIP 102532 / B31) (Borrelia burgdorferi).